Reading from the N-terminus, the 287-residue chain is Probable glucose uptake protein GlcU (287 aa).

9 helical membrane passes run 7-29 (LIAL…VGGG), 34-56 (IRGT…FAKF), 58-75 (NPTV…WAFG), 114-136 (WSSM…GVAL), 156-178 (MGIL…IFGV), 183-202 (ALFF…SMNH), 209-228 (TALN…FMFY), 233-255 (VGVA…GGIF), and 267-286 (TGIW…LGNL).

The protein belongs to the GRP transporter (TC 2.A.7.5) family.

The protein localises to the cell membrane. In terms of biological role, involved in the uptake of glucose. The chain is Probable glucose uptake protein GlcU (glcU) from Staphylococcus aureus (strain MRSA252).